Reading from the N-terminus, the 451-residue chain is MKDEQLYYFEKSPVFKAMMHFSLPMMIGTLLSVIYGILNIYFIGFLEDSHMISAISLTLPVFAILMGLGNLFGVGAGTYISRLLGAKDYSKSKFVSSFSIYGGIALGLIVILVTLPFSDQIAAILGARGETLALTSNYLKVMFLSAPFVILFFILEQFARAIGAPMISMIGMLASVGLNIILDPILIFGFDLNVVGAALGTAISNVAAALFFIVYFMKNSDVVSVNIKLAKPNKEMLSEIFKIGIPAFLMSILMGFTGLVLNLFLAHYGNFAIASYGISFRLVQFPELIIMGLCEGVVPLIAYNFMANKGRMKDVIKAVIMSIGVIFVVCMIAVFTIGHHMVGLFTTDQDIVEMATFILKVTMTSLLLNGIGFLFTGMLQATGQGRGATIMAILQGAIIIPVLFIMNALFGLTGVIWSLLIAESLCALAAMLIVYLLRDRLTVDTSELIEG.

12 helical membrane-spanning segments follow: residues 26-46 (MIGTLLSVIYGILNIYFIGFL), 54-74 (AISLTLPVFAILMGLGNLFGV), 97-117 (SFSIYGGIALGLIVILVTLPF), 139-159 (LKVMFLSAPFVILFFILEQFA), 170-190 (IGMLASVGLNIILDPILIFGF), 194-214 (VVGAALGTAISNVAAALFFIV), 245-265 (IPAFLMSILMGFTGLVLNLFL), 282-302 (LVQFPELIIMGLCEGVVPLIA), 318-338 (AVIMSIGVIFVVCMIAVFTIG), 355-375 (ATFILKVTMTSLLLNGIGFLF), 397-417 (AIIIPVLFIMNALFGLTGVIW), and 418-438 (SLLIAESLCALAAMLIVYLLR).

This sequence belongs to the multi antimicrobial extrusion (MATE) (TC 2.A.66.1) family. MepA subfamily.

It localises to the cell membrane. Its function is as follows. Multidrug resistance efflux protein. The polypeptide is Multidrug export protein MepA (mepA) (Staphylococcus aureus (strain MSSA476)).